The primary structure comprises 90 residues: Probable Fe(2+)-trafficking protein (90 aa).

It belongs to the Fe(2+)-trafficking protein family.

Functionally, could be a mediator in iron transactions between iron acquisition and iron-requiring processes, such as synthesis and/or repair of Fe-S clusters in biosynthetic enzymes. The protein is Probable Fe(2+)-trafficking protein of Cupriavidus taiwanensis (strain DSM 17343 / BCRC 17206 / CCUG 44338 / CIP 107171 / LMG 19424 / R1) (Ralstonia taiwanensis (strain LMG 19424)).